Here is a 906-residue protein sequence, read N- to C-terminus: Protein transport protein SEC24-2 (906 aa).

The Zn(2+) site is built by Cys-222, Cys-225, Cys-244, and Cys-247. The zinc finger-like stretch occupies residues 222–247 (CRRCRSYMNPFVTFIEQGRRWRCNFC).

It belongs to the SEC23/SEC24 family. SEC24 subfamily. In terms of assembly, the COPII coat is composed of at least 5 proteins: the SEC23/24 complex, the SEC13/31 complex, and the protein SAR1. Golgi apparatus membrane; Peripheral membrane protein; Cytoplasmic side.

It localises to the cytoplasm. The protein localises to the cytoplasmic vesicle. It is found in the COPII-coated vesicle membrane. Its subcellular location is the endoplasmic reticulum membrane. The protein resides in the golgi apparatus membrane. Component of the coat protein complex II (COPII) which promotes the formation of transport vesicles from the endoplasmic reticulum (ER). The coat has two main functions, the physical deformation of the endoplasmic reticulum membrane into vesicles and the selection of cargo molecules. The chain is Protein transport protein SEC24-2 (SEC242) from Candida glabrata (strain ATCC 2001 / BCRC 20586 / JCM 3761 / NBRC 0622 / NRRL Y-65 / CBS 138) (Yeast).